Reading from the N-terminus, the 727-residue chain is Probable acyl-activating enzyme 18, peroxisomal (727 aa).

The Microbody targeting signal motif lies at 725-727; that stretch reads SRI.

This sequence belongs to the ATP-dependent AMP-binding enzyme family. In terms of tissue distribution, expressed in flowers.

The protein localises to the peroxisome. May be involved in the peroxisomal activation of 2,4-dichlorophenoxybutyric acid (2,4-DB), a precursor of active auxins that inhibit root growth. In Arabidopsis thaliana (Mouse-ear cress), this protein is Probable acyl-activating enzyme 18, peroxisomal (AAE18).